The primary structure comprises 696 residues: DNA-directed RNA polymerase subunit beta' (696 aa).

C76, C78, C94, and C97 together coordinate Zn(2+). Mg(2+)-binding residues include D496, D498, and D500.

This sequence belongs to the RNA polymerase beta' chain family. RpoC1 subfamily. In terms of assembly, in plastids the minimal PEP RNA polymerase catalytic core is composed of four subunits: alpha, beta, beta', and beta''. When a (nuclear-encoded) sigma factor is associated with the core the holoenzyme is formed, which can initiate transcription. Mg(2+) serves as cofactor. The cofactor is Zn(2+).

The protein localises to the plastid. It localises to the chloroplast. The catalysed reaction is RNA(n) + a ribonucleoside 5'-triphosphate = RNA(n+1) + diphosphate. In terms of biological role, DNA-dependent RNA polymerase catalyzes the transcription of DNA into RNA using the four ribonucleoside triphosphates as substrates. This Guizotia abyssinica (Niger) protein is DNA-directed RNA polymerase subunit beta'.